Reading from the N-terminus, the 152-residue chain is Xanthine-guanine phosphoribosyltransferase (152 aa).

5-phospho-alpha-D-ribose 1-diphosphate contacts are provided by residues 37-38, R69, and 88-96; these read RG and DDLVDTGGT. Residue R69 participates in GMP binding. Residue D89 coordinates Mg(2+). 2 residues coordinate guanine: D92 and I135. 2 residues coordinate xanthine: D92 and I135. Residues 92–96 and 134–135 contribute to the GMP site; these read DTGGT and WI.

The protein belongs to the purine/pyrimidine phosphoribosyltransferase family. XGPT subfamily. As to quaternary structure, homotetramer. Requires Mg(2+) as cofactor.

Its subcellular location is the cell inner membrane. The enzyme catalyses GMP + diphosphate = guanine + 5-phospho-alpha-D-ribose 1-diphosphate. The catalysed reaction is XMP + diphosphate = xanthine + 5-phospho-alpha-D-ribose 1-diphosphate. It carries out the reaction IMP + diphosphate = hypoxanthine + 5-phospho-alpha-D-ribose 1-diphosphate. It participates in purine metabolism; GMP biosynthesis via salvage pathway; GMP from guanine: step 1/1. The protein operates within purine metabolism; XMP biosynthesis via salvage pathway; XMP from xanthine: step 1/1. In terms of biological role, purine salvage pathway enzyme that catalyzes the transfer of the ribosyl-5-phosphate group from 5-phospho-alpha-D-ribose 1-diphosphate (PRPP) to the N9 position of the 6-oxopurines guanine and xanthine to form the corresponding ribonucleotides GMP (guanosine 5'-monophosphate) and XMP (xanthosine 5'-monophosphate), with the release of PPi. To a lesser extent, also acts on hypoxanthine. This chain is Xanthine-guanine phosphoribosyltransferase, found in Citrobacter koseri (strain ATCC BAA-895 / CDC 4225-83 / SGSC4696).